A 1101-amino-acid chain; its full sequence is Error-prone DNA polymerase (1101 aa).

The tract at residues 1055 to 1101 (ADLGHPMDSAVGQTTPQTDSAPRPRPQPRAMHPREQAKRLFPSRDFH) is disordered. A compositionally biased stretch (polar residues) spans 1065-1074 (VGQTTPQTDS). Residues 1086–1101 (HPREQAKRLFPSRDFH) are compositionally biased toward basic and acidic residues.

Belongs to the DNA polymerase type-C family. DnaE2 subfamily.

Its subcellular location is the cytoplasm. It catalyses the reaction DNA(n) + a 2'-deoxyribonucleoside 5'-triphosphate = DNA(n+1) + diphosphate. DNA polymerase involved in damage-induced mutagenesis and translesion synthesis (TLS). It is not the major replicative DNA polymerase. In Ruegeria pomeroyi (strain ATCC 700808 / DSM 15171 / DSS-3) (Silicibacter pomeroyi), this protein is Error-prone DNA polymerase.